The following is a 208-amino-acid chain: Small ribosomal subunit protein uS4 (208 aa).

The disordered stretch occupies residues 30–49 (EKRPYAPGEHGRDRRRTESD). One can recognise an S4 RNA-binding domain in the interval 95 to 161 (TRLDNLVLRA…VPFQIAAEGV (67 aa)).

The protein belongs to the universal ribosomal protein uS4 family. In terms of assembly, part of the 30S ribosomal subunit. Contacts protein S5. The interaction surface between S4 and S5 is involved in control of translational fidelity.

One of the primary rRNA binding proteins, it binds directly to 16S rRNA where it nucleates assembly of the body of the 30S subunit. Its function is as follows. With S5 and S12 plays an important role in translational accuracy. This Bifidobacterium longum (strain DJO10A) protein is Small ribosomal subunit protein uS4.